We begin with the raw amino-acid sequence, 515 residues long: Maturase K (515 aa).

It belongs to the intron maturase 2 family. MatK subfamily.

Its subcellular location is the plastid. It is found in the chloroplast. Its function is as follows. Usually encoded in the trnK tRNA gene intron. Probably assists in splicing its own and other chloroplast group II introns. The protein is Maturase K of Zingiber officinale (Ginger).